Here is a 126-residue protein sequence, read N- to C-terminus: Urease subunit beta (126 aa).

This sequence belongs to the urease beta subunit family. In terms of assembly, heterotrimer of UreA (gamma), UreB (beta) and UreC (alpha) subunits. Three heterotrimers associate to form the active enzyme.

It is found in the cytoplasm. The catalysed reaction is urea + 2 H2O + H(+) = hydrogencarbonate + 2 NH4(+). The protein operates within nitrogen metabolism; urea degradation; CO(2) and NH(3) from urea (urease route): step 1/1. This is Urease subunit beta from Gloeothece citriformis (strain PCC 7424) (Cyanothece sp. (strain PCC 7424)).